We begin with the raw amino-acid sequence, 65 residues long: UPF0434 protein BQ10150 (65 aa).

Belongs to the UPF0434 family.

The chain is UPF0434 protein BQ10150 from Bartonella quintana (strain Toulouse) (Rochalimaea quintana).